The chain runs to 281 residues: Nucleotide-binding protein Patl_0571 (281 aa).

Residue 8–15 (GRSGSGKS) participates in ATP binding. Position 56–59 (56–59 (DVRN)) interacts with GTP.

The protein belongs to the RapZ-like family.

Displays ATPase and GTPase activities. The chain is Nucleotide-binding protein Patl_0571 from Pseudoalteromonas atlantica (strain T6c / ATCC BAA-1087).